A 228-amino-acid polypeptide reads, in one-letter code: UPF0502 protein AZOSEA09860 (228 aa).

This sequence belongs to the UPF0502 family.

The polypeptide is UPF0502 protein AZOSEA09860 (Aromatoleum aromaticum (strain DSM 19018 / LMG 30748 / EbN1) (Azoarcus sp. (strain EbN1))).